A 130-amino-acid chain; its full sequence is MRRILFKSKIHRATVTQADLDYEGSVTIDRDLLRAADIVENEKVAVWNITQGTRLETYALEGEAGSGVICINGAAAHLNKPGDLVILATFAEVEEAEVANWKPTVVFVDKDNRVVPGQTKEIPGPQRRSA.

The active-site Schiff-base intermediate with substrate; via pyruvic acid is serine 25. Serine 25 is subject to Pyruvic acid (Ser). Threonine 57 provides a ligand contact to substrate. Tyrosine 58 acts as the Proton donor in catalysis. Residue 73-75 coordinates substrate; sequence GAA.

The protein belongs to the PanD family. As to quaternary structure, heterooctamer of four alpha and four beta subunits. The cofactor is pyruvate. Is synthesized initially as an inactive proenzyme, which is activated by self-cleavage at a specific serine bond to produce a beta-subunit with a hydroxyl group at its C-terminus and an alpha-subunit with a pyruvoyl group at its N-terminus.

The protein resides in the cytoplasm. The enzyme catalyses L-aspartate + H(+) = beta-alanine + CO2. It participates in cofactor biosynthesis; (R)-pantothenate biosynthesis; beta-alanine from L-aspartate: step 1/1. In terms of biological role, catalyzes the pyruvoyl-dependent decarboxylation of aspartate to produce beta-alanine. This is Aspartate 1-decarboxylase from Myxococcus xanthus (strain DK1622).